We begin with the raw amino-acid sequence, 293 residues long: Acetyl-coenzyme A carboxylase carboxyl transferase subunit beta (293 aa).

In terms of domain architecture, CoA carboxyltransferase N-terminal spans leucine 29–isoleucine 293. Positions 33, 36, 52, and 55 each coordinate Zn(2+). A C4-type zinc finger spans residues cysteine 33–cysteine 55.

This sequence belongs to the AccD/PCCB family. As to quaternary structure, acetyl-CoA carboxylase is a heterohexamer composed of biotin carboxyl carrier protein (AccB), biotin carboxylase (AccC) and two subunits each of ACCase subunit alpha (AccA) and ACCase subunit beta (AccD). The cofactor is Zn(2+).

It is found in the cytoplasm. The enzyme catalyses N(6)-carboxybiotinyl-L-lysyl-[protein] + acetyl-CoA = N(6)-biotinyl-L-lysyl-[protein] + malonyl-CoA. Its pathway is lipid metabolism; malonyl-CoA biosynthesis; malonyl-CoA from acetyl-CoA: step 1/1. In terms of biological role, component of the acetyl coenzyme A carboxylase (ACC) complex. Biotin carboxylase (BC) catalyzes the carboxylation of biotin on its carrier protein (BCCP) and then the CO(2) group is transferred by the transcarboxylase to acetyl-CoA to form malonyl-CoA. This is Acetyl-coenzyme A carboxylase carboxyl transferase subunit beta from Prochlorococcus marinus (strain MIT 9312).